We begin with the raw amino-acid sequence, 611 residues long: Glutamine--fructose-6-phosphate aminotransferase [isomerizing] (611 aa).

The active-site Nucleophile; for GATase activity is the C2. In terms of domain architecture, Glutamine amidotransferase type-2 spans 2-219; it reads CGIVGGVSKT…DGDVAMLQRQ (218 aa). SIS domains are found at residues 287–427 and 460–601; these read AAAM…APGA and WAAR…VDRP. The For Fru-6P isomerization activity role is filled by K606.

In terms of assembly, homodimer.

The protein resides in the cytoplasm. The enzyme catalyses D-fructose 6-phosphate + L-glutamine = D-glucosamine 6-phosphate + L-glutamate. Catalyzes the first step in hexosamine metabolism, converting fructose-6P into glucosamine-6P using glutamine as a nitrogen source. This Acidithiobacillus ferridurans protein is Glutamine--fructose-6-phosphate aminotransferase [isomerizing].